We begin with the raw amino-acid sequence, 398 residues long: Putative tyrosine-protein phosphatase C15H7.3 (398 aa).

Residues 1-15 (MERSQKSARKKKKTS) are compositionally biased toward basic residues. A disordered region spans residues 1-114 (MERSQKSARK…EPWSEEEPAK (114 aa)). Residues 18–40 (GNDRSIRSERKSKQKKPAGEKSQ) are compositionally biased toward basic and acidic residues. The span at 41–50 (KSRRTRKSRG) shows a compositional bias: basic residues. Positions 55-73 (GFTSRETIQPSSSGQSEGT) are enriched in polar residues. The segment covering 74–114 (TRMDDQKDEKKDDKKEEKKEERKEEKKEEVKEPWSEEEPAK) has biased composition (basic and acidic residues). Positions 125–376 (TNVGGTFKQT…GTVHRSMACW (252 aa)) constitute a Tyrosine-protein phosphatase domain.

Belongs to the protein-tyrosine phosphatase family. Non-receptor class subfamily.

It carries out the reaction O-phospho-L-tyrosyl-[protein] + H2O = L-tyrosyl-[protein] + phosphate. This chain is Putative tyrosine-protein phosphatase C15H7.3, found in Caenorhabditis elegans.